A 385-amino-acid chain; its full sequence is tRNA-specific 2-thiouridylase MnmA (385 aa).

Residues 29–36 and leucine 55 each bind ATP; that span reads GLSGGVDS. The active-site Nucleophile is the cysteine 116. A disulfide bridge connects residues cysteine 116 and cysteine 225. Glycine 141 contributes to the ATP binding site. An interaction with tRNA region spans residues 175-177; sequence KDQ. The active-site Cysteine persulfide intermediate is cysteine 225. The segment at 330–331 is interaction with tRNA; the sequence is RY.

Belongs to the MnmA/TRMU family.

The protein localises to the cytoplasm. It catalyses the reaction S-sulfanyl-L-cysteinyl-[protein] + uridine(34) in tRNA + AH2 + ATP = 2-thiouridine(34) in tRNA + L-cysteinyl-[protein] + A + AMP + diphosphate + H(+). In terms of biological role, catalyzes the 2-thiolation of uridine at the wobble position (U34) of tRNA, leading to the formation of s(2)U34. The protein is tRNA-specific 2-thiouridylase MnmA of Prochlorococcus marinus (strain MIT 9301).